The chain runs to 103 residues: Pseudonajatoxin b homolog (103 aa).

Positions 1-21 are cleaved as a signal peptide; sequence MKTLLLTLVVVTIVCLDLGYT. 5 disulfides stabilise this stretch: cysteine 24–cysteine 42, cysteine 35–cysteine 63, cysteine 48–cysteine 52, cysteine 67–cysteine 79, and cysteine 80–cysteine 85.

It belongs to the three-finger toxin family. Long-chain subfamily. Type II alpha-neurotoxin sub-subfamily. In terms of tissue distribution, expressed by the venom gland.

It is found in the secreted. Functionally, binds with high affinity to muscular (alpha-1/CHRNA1) and neuronal (alpha-7/CHRNA7) nicotinic acetylcholine receptor (nAChR) and inhibits acetylcholine from binding to the receptor, thereby impairing neuromuscular and neuronal transmission. The polypeptide is Pseudonajatoxin b homolog (Pseudonaja textilis (Eastern brown snake)).